Reading from the N-terminus, the 103-residue chain is UPF0473 protein LBA0420 (103 aa).

This sequence belongs to the UPF0473 family.

The protein is UPF0473 protein LBA0420 of Lactobacillus acidophilus (strain ATCC 700396 / NCK56 / N2 / NCFM).